Here is a 249-residue protein sequence, read N- to C-terminus: Metallo-beta-lactamase type 2 (249 aa).

The signal sequence occupies residues 1–22 (MLKKIKISLILALGLTSLQAFG). Positions 98, 100, 102, 161, and 180 each coordinate Zn(2+). A substrate-binding site is contributed by Lys-183. His-222 is a binding site for Zn(2+).

The protein belongs to the metallo-beta-lactamase superfamily. Class-B beta-lactamase family. Monomer. Zn(2+) serves as cofactor.

It is found in the periplasm. It carries out the reaction a beta-lactam + H2O = a substituted beta-amino acid. With respect to regulation, inhibited by chelating agents such as EDTA, 1-10 phenanthroline and pyridine-2,6-dicarboxylic acid. Functionally, confers resistance to the different beta-lactams antibiotics (penicillin, cephalosporin and carbapenem) via the hydrolysis of the beta-lactam ring. This chain is Metallo-beta-lactamase type 2 (blaB1), found in Elizabethkingia meningoseptica (Chryseobacterium meningosepticum).